Reading from the N-terminus, the 84-residue chain is SPbeta prophage-derived uncharacterized protein YomY (84 aa).

The sequence is that of SPbeta prophage-derived uncharacterized protein YomY (yomY) from Bacillus subtilis (strain 168).